Reading from the N-terminus, the 213-residue chain is Uracil phosphoribosyltransferase (213 aa).

5-phospho-alpha-D-ribose 1-diphosphate contacts are provided by residues Arg78, Arg103, and 131-139; that span reads DPMLATGGT. Residues Ile197 and 202–204 each bind uracil; that span reads GDA. Residue Asp203 participates in 5-phospho-alpha-D-ribose 1-diphosphate binding.

Belongs to the UPRTase family. Requires Mg(2+) as cofactor.

It catalyses the reaction UMP + diphosphate = 5-phospho-alpha-D-ribose 1-diphosphate + uracil. The protein operates within pyrimidine metabolism; UMP biosynthesis via salvage pathway; UMP from uracil: step 1/1. Allosterically activated by GTP. Catalyzes the conversion of uracil and 5-phospho-alpha-D-ribose 1-diphosphate (PRPP) to UMP and diphosphate. The protein is Uracil phosphoribosyltransferase of Bifidobacterium longum (strain DJO10A).